The sequence spans 72 residues: UPF0150 protein ssl0738 (72 aa).

It belongs to the UPF0150 family.

The chain is UPF0150 protein ssl0738 from Synechocystis sp. (strain ATCC 27184 / PCC 6803 / Kazusa).